Reading from the N-terminus, the 447-residue chain is Putative metabolite transport protein HI_0418 (447 aa).

The Cytoplasmic segment spans residues 1–28 (MCKPQQKHYGRQVMNTQNSLKQVATATM). Residues 29-49 (VGTAIEYFDNYIYAMAAVLVF) form a helical membrane-spanning segment. The Periplasmic portion of the chain corresponds to 50 to 63 (NHQFFHAVDPLSGQ). The helical transmembrane segment at 64-84 (IAALSTLALTFIARPLGAILF) threads the bilayer. Residues 85–96 (GHFGDRFGRKNT) lie on the Cytoplasmic side of the membrane. Residues 97–117 (FVMSLLLMGISTVVIGLLPTY) form a helical membrane-spanning segment. The Periplasmic portion of the chain corresponds to 118-119 (DS). Residues 120–140 (IGIWATILLCLCRIGQGIGLG) traverse the membrane as a helical segment. Residues 141–167 (GEWGGAALVAVENAPEGKRGWYGTFPQ) are Cytoplasmic-facing. A helical transmembrane segment spans residues 168–188 (LGAPLGLLLANGVFLGITAIF). The Periplasmic segment spans residues 189-194 (GQEAMT). Residues 195–215 (EWAWRIPFLSSVILVAIGLYV) traverse the membrane as a helical segment. Residues 216–249 (RLKLTEAPIFLAALNKPKPKRLPMLEVVTTHFKP) are Cytoplasmic-facing. The chain crosses the membrane as a helical span at residues 250–270 (FFLGMLVCIAGYVLFYIMIAF). Residues 271 to 295 (SQIYAKSAPTVSEAGYAMGLGFSPQ) lie on the Periplasmic side of the membrane. The chain crosses the membrane as a helical span at residues 296–316 (IFTALLMASAVSLAITIAASG). The Cytoplasmic portion of the chain corresponds to 317–325 (KYIDKIGRR). The helical transmembrane segment at 326–346 (TWLIWTTVGVAIFGLSLPLFL) threads the bilayer. Over 347-354 (ENGTTTSL) the chain is Periplasmic. The helical transmembrane segment at 355–375 (FWFLFIGMGLIGMGYGPLASF) threads the bilayer. Over 376 to 390 (LPELFPTHARYSGAS) the chain is Cytoplasmic. A helical membrane pass occupies residues 391–411 (LTYNIAGLFGASVAAIIALPL). At 412 to 418 (NAHYGLK) the chain is on the periplasmic side. The chain crosses the membrane as a helical span at residues 419 to 439 (GVGIYLTLNAVLSLVGLWFIS). The Cytoplasmic portion of the chain corresponds to 440–447 (ETKDKLLS).

It belongs to the major facilitator superfamily. Metabolite:H+ Symporter (MHS) family (TC 2.A.1.6) family.

The protein resides in the cell inner membrane. This is Putative metabolite transport protein HI_0418 from Haemophilus influenzae (strain ATCC 51907 / DSM 11121 / KW20 / Rd).